Reading from the N-terminus, the 91-residue chain is Small ribosomal subunit protein bS16 (91 aa).

The protein belongs to the bacterial ribosomal protein bS16 family.

The polypeptide is Small ribosomal subunit protein bS16 (Latilactobacillus sakei subsp. sakei (strain 23K) (Lactobacillus sakei subsp. sakei)).